The following is a 309-amino-acid chain: Heme A synthase (309 aa).

Residues 1 to 6 (MTKKLK) are Cytoplasmic-facing. The chain crosses the membrane as a helical span at residues 7-27 (ILSVISTICMIPLLLGGALVT). The Extracellular segment spans residues 28 to 62 (KTGSADGCGNSWPLCEGQFLPTKISFEMFIELSHR). Cys-35 and Cys-42 are joined by a disulfide. Residue Glu-58 is part of the active site. Residue His-61 participates in heme o binding. The chain crosses the membrane as a helical span at residues 63–83 (GVTGVVGILIVYLTYLVWKEL). Over 84 to 88 (RHNKE) the chain is Cytoplasmic. A helical transmembrane segment spans residues 89-109 (VVFLAFSALSLMILQALIGAA). At 110–123 (AVVWGQSDFALATH) the chain is on the extracellular side. Heme o is bound at residue His-123. Residues 124-144 (FGISLVCFAAVFLLMLQLFEI) traverse the membrane as a helical segment. Residues 145–159 (DKKLHTEDIHINKTH) lie on the Cytoplasmic side of the membrane. Residues 160–180 (RIEIYAISFYTMCVVYSGALV) form a helical membrane-spanning segment. The Extracellular segment spans residues 181 to 211 (RHTDSNLACRDWPLCVNNSSFGISDYNFYQW). Cys-189 and Cys-195 are oxidised to a cystine. The helical transmembrane segment at 212-232 (VQMGHRLAAGILFIWTVILTI) threads the bilayer. A heme b-binding site is contributed by His-216. Residues 233-247 (RMVKHYKNSKVFYWS) lie on the Cytoplasmic side of the membrane. Residues 248–268 (WLITLGLITLQVLFGALIIFT) form a helical membrane-spanning segment. Topologically, residues 269–271 (SLN) are extracellular. A helical transmembrane segment spans residues 272–292 (LAIALFHALFITCYFGMLSFF). His-278 contacts heme b. Topologically, residues 293–309 (MHLSFRAKRREKYSNQS) are cytoplasmic.

It belongs to the COX15/CtaA family. Type 1 subfamily. As to quaternary structure, interacts with CtaB. Heme b is required as a cofactor.

It is found in the cell membrane. It catalyses the reaction Fe(II)-heme o + 2 A + H2O = Fe(II)-heme a + 2 AH2. The protein operates within porphyrin-containing compound metabolism; heme A biosynthesis; heme A from heme O: step 1/1. In terms of biological role, catalyzes the conversion of heme O to heme A by two successive hydroxylations of the methyl group at C8. The first hydroxylation forms heme I, the second hydroxylation results in an unstable dihydroxymethyl group, which spontaneously dehydrates, resulting in the formyl group of heme A. The polypeptide is Heme A synthase (Oceanobacillus iheyensis (strain DSM 14371 / CIP 107618 / JCM 11309 / KCTC 3954 / HTE831)).